Reading from the N-terminus, the 543-residue chain is Chaperonin GroEL 1 (543 aa).

ATP contacts are provided by residues 30–33 (TLGP), Lys51, 87–91 (DGTTT), Gly415, and Asp496.

This sequence belongs to the chaperonin (HSP60) family. As to quaternary structure, forms a cylinder of 14 subunits composed of two heptameric rings stacked back-to-back. Interacts with the co-chaperonin GroES.

The protein resides in the cytoplasm. It catalyses the reaction ATP + H2O + a folded polypeptide = ADP + phosphate + an unfolded polypeptide.. In terms of biological role, together with its co-chaperonin GroES, plays an essential role in assisting protein folding. The GroEL-GroES system forms a nano-cage that allows encapsulation of the non-native substrate proteins and provides a physical environment optimized to promote and accelerate protein folding. This Roseobacter denitrificans (strain ATCC 33942 / OCh 114) (Erythrobacter sp. (strain OCh 114)) protein is Chaperonin GroEL 1.